The primary structure comprises 39 residues: Large ribosomal subunit protein bL36 (39 aa).

Belongs to the bacterial ribosomal protein bL36 family.

The protein is Large ribosomal subunit protein bL36 of Pediococcus pentosaceus (strain ATCC 25745 / CCUG 21536 / LMG 10740 / 183-1w).